Consider the following 254-residue polypeptide: MNKLFSFWKRKNETRSQGYNLREKDLKKLHRAASVGDLKKLKEYLQIKKYDVNMQDKKYRTPLHLACANGHTDVVLFLIEQQCKINVRDSENKSPLIKAVQCQNEDCATILLNFGADPDLRDIRYNTVLHYAVCGQSLSLVEKLLEYEADLEAKNKDGYTPLLVAVINNNPKMVKFLLEKGADVNASDNYQRTALILAVSGEPPCLVKLLLQQGVELCYEGIVDSQLRNMFISMVLLHRYPQFTASHGKKKHAK.

ANK repeat units follow at residues 58–87 (KYRT…KINV), 91–120 (ENKS…DPDL), 124–153 (RYNT…DLEA), 157–186 (DGYT…DVNA), and 190–219 (YQRT…ELCY).

As to expression, testis specific.

The sequence is that of Ankyrin repeat domain-containing protein 7 (ANKRD7) from Homo sapiens (Human).